A 204-amino-acid polypeptide reads, in one-letter code: Leucyl/phenylalanyl-tRNA--protein transferase (204 aa).

The protein belongs to the L/F-transferase family.

The protein localises to the cytoplasm. It carries out the reaction N-terminal L-lysyl-[protein] + L-leucyl-tRNA(Leu) = N-terminal L-leucyl-L-lysyl-[protein] + tRNA(Leu) + H(+). It catalyses the reaction N-terminal L-arginyl-[protein] + L-leucyl-tRNA(Leu) = N-terminal L-leucyl-L-arginyl-[protein] + tRNA(Leu) + H(+). The catalysed reaction is L-phenylalanyl-tRNA(Phe) + an N-terminal L-alpha-aminoacyl-[protein] = an N-terminal L-phenylalanyl-L-alpha-aminoacyl-[protein] + tRNA(Phe). Functions in the N-end rule pathway of protein degradation where it conjugates Leu, Phe and, less efficiently, Met from aminoacyl-tRNAs to the N-termini of proteins containing an N-terminal arginine or lysine. This chain is Leucyl/phenylalanyl-tRNA--protein transferase, found in Agrobacterium fabrum (strain C58 / ATCC 33970) (Agrobacterium tumefaciens (strain C58)).